Here is a 306-residue protein sequence, read N- to C-terminus: Pantothenate kinase (306 aa).

91–98 (GSVAVGKS) lines the ATP pocket.

The protein belongs to the prokaryotic pantothenate kinase family.

The protein localises to the cytoplasm. The enzyme catalyses (R)-pantothenate + ATP = (R)-4'-phosphopantothenate + ADP + H(+). It functions in the pathway cofactor biosynthesis; coenzyme A biosynthesis; CoA from (R)-pantothenate: step 1/5. This chain is Pantothenate kinase, found in Streptococcus suis (strain 98HAH33).